A 1105-amino-acid chain; its full sequence is Ran-binding protein 6 (1105 aa).

Position 2 is an N-acetylalanine (Ala-2). HEAT repeat units lie at residues 219–257 (FKDF…TVPK), 361–399 (KVVL…GCHQ), 402–440 (EPIL…DFAP), 444–483 (KKFH…DCPK), 866–905 (LPWF…HCSP), 908–946 (FKYV…FGGD), and 949–987 (RSLC…IGKI).

This sequence belongs to the importin beta family.

The protein resides in the cytoplasm. The protein localises to the nucleus. Functionally, may function in nuclear protein import as nuclear transport receptor. The chain is Ran-binding protein 6 (Ranbp6) from Mus musculus (Mouse).